A 551-amino-acid polypeptide reads, in one-letter code: Chaperonin GroEL (551 aa).

Residues 30–33, Lys51, 87–91, Gly415, 478–480, and Asp494 each bind ATP; these read TLGP, DGTTT, and NAA.

It belongs to the chaperonin (HSP60) family. In terms of assembly, forms a cylinder of 14 subunits composed of two heptameric rings stacked back-to-back. Interacts with the co-chaperonin GroES.

Its subcellular location is the cytoplasm. The catalysed reaction is ATP + H2O + a folded polypeptide = ADP + phosphate + an unfolded polypeptide.. Its function is as follows. Together with its co-chaperonin GroES, plays an essential role in assisting protein folding. The GroEL-GroES system forms a nano-cage that allows encapsulation of the non-native substrate proteins and provides a physical environment optimized to promote and accelerate protein folding. The protein is Chaperonin GroEL of Syntrophotalea carbinolica (strain DSM 2380 / NBRC 103641 / GraBd1) (Pelobacter carbinolicus).